The primary structure comprises 233 residues: Large ribosomal subunit protein uL1 (233 aa).

Belongs to the universal ribosomal protein uL1 family. In terms of assembly, part of the 50S ribosomal subunit.

In terms of biological role, binds directly to 23S rRNA. The L1 stalk is quite mobile in the ribosome, and is involved in E site tRNA release. Its function is as follows. Protein L1 is also a translational repressor protein, it controls the translation of the L11 operon by binding to its mRNA. This is Large ribosomal subunit protein uL1 from Aeromonas hydrophila subsp. hydrophila (strain ATCC 7966 / DSM 30187 / BCRC 13018 / CCUG 14551 / JCM 1027 / KCTC 2358 / NCIMB 9240 / NCTC 8049).